Here is a 310-residue protein sequence, read N- to C-terminus: Putative S-adenosyl-L-methionine-dependent methyltransferase Franean1_4929 (310 aa).

A disordered region spans residues 1–28; sequence MSRPSAPRGRTELRSIHERGHERGSAGV. Residues 9–24 show a composition bias toward basic and acidic residues; that stretch reads GRTELRSIHERGHERG. Residues aspartate 136 and 165–166 each bind S-adenosyl-L-methionine; that span reads DL.

This sequence belongs to the UPF0677 family.

In terms of biological role, exhibits S-adenosyl-L-methionine-dependent methyltransferase activity. This chain is Putative S-adenosyl-L-methionine-dependent methyltransferase Franean1_4929, found in Parafrankia sp. (strain EAN1pec).